We begin with the raw amino-acid sequence, 40 residues long: U2-myrmicitoxin-Tb1a (40 aa).

The N-terminal stretch at 1–3 (AEA) is a signal peptide. Residues 4–29 (MAEAMADAMADAMADAMADAMAEAAA) constitute a propeptide that is removed on maturation. R39 bears the Arginine amide mark.

This sequence belongs to the formicidae venom precursor-01 superfamily. In terms of tissue distribution, expressed by the venom gland.

It localises to the secreted. Venom protein with unknown function. Does not induce paralysis when a high dose is administered by intrathoracic injection into the blowfly Lucilia caesar. The chain is U2-myrmicitoxin-Tb1a from Tetramorium bicarinatum (Tramp ant).